Consider the following 180-residue polypeptide: Translation initiation factor IF-3 (180 aa).

Belongs to the IF-3 family. Monomer.

Its subcellular location is the cytoplasm. Its function is as follows. IF-3 binds to the 30S ribosomal subunit and shifts the equilibrium between 70S ribosomes and their 50S and 30S subunits in favor of the free subunits, thus enhancing the availability of 30S subunits on which protein synthesis initiation begins. In Salmonella typhi, this protein is Translation initiation factor IF-3.